A 579-amino-acid polypeptide reads, in one-letter code: Rop guanine nucleotide exchange factor 6 (579 aa).

The span at 31–61 shows a compositional bias: low complexity; the sequence is ESTTDSSLSSSSSGVGSSSGRSSVAERSVSS. Residues 31-89 form a disordered region; sequence ESTTDSSLSSSSSGVGSSSGRSSVAERSVSSPPTKSQILGWPLGQGSWRKSSGKMKKKT. A PRONE domain is found at 98 to 479; the sequence is FKRVGTETSE…DISKDDGDGD (382 aa).

Its function is as follows. Guanine-nucleotide exchange factor (GEF) that acts as an activator of Rop (Rho of plants) GTPases by promoting the exchange of GDP for GTP. The chain is Rop guanine nucleotide exchange factor 6 (ROPGEF6) from Arabidopsis thaliana (Mouse-ear cress).